We begin with the raw amino-acid sequence, 74 residues long: Ubiquitin-like protein FUBI (74 aa).

It belongs to the ubiquitin family.

The chain is Ubiquitin-like protein FUBI (Fau) from Mus spicilegus (Steppe mouse).